A 668-amino-acid polypeptide reads, in one-letter code: MADELFCKVLSIGIKCRECEDRRANVRLTVESRSSSNPVHKKELVVRLSDDTDPFFLYNLTLGEEDFQSLKNQQGLLVEFSAFPQRFIDLLEQCILEQEKPVPRFLLQLAMSSNALDCMPASLNIIETNPFKHLIHLSLKLLAGSDSDVKKYLATCIKNLKLENCTLKEKLHKSEEDLSKRLGVTQQALAEKCKELDKLRNEWASQTSLLTSKHTQEIGAEREKALQIQTQYQLQYEQQKKELETTSSRTVHHLESRVSELEAVNKDLTERKYKSESCIRELKGKLSGIEEEYHRAKQEVTSLRRENATLDSECHEKEKLINQLKTKTAVLEQEVKDKEHVIIRSVDACESAQEHKKKLEDSLEQKQMQTGKLETTVKSLSEELIKANEIIKKLQTDMKKLMEKIKLKNAVTMQQEKLLGEKEQTLQKEKLELTNVKHLLKIKEEEMLKLKEQLDSTTEKLEESKQQLKTNENVIAWLNKQLNENKIATLQGPHGLHEMPSSLKTVGSASNVGVMQSTQPQFTIGNDPYMVSPITQPIGSAFVSNFYPKNFAPGMSAPSSISLGTRLNPQAAFKANVRFNQSPTALCSPAVEPRPAPSTSTPILPSTSCDPVGLDMKYLKKNGSVPVKGQRNGSSAGTVPVRPALPKSGSSPILSAYFPGQQSRLPAS.

Residues 39-91 (VHKKELVVRLSDDTDPFFLYNLTLGEEDFQSLKNQQGLLVEFSAFPQRFIDLL) enclose the PISA domain. A coiled-coil region spans residues 182-482 (LGVTQQALAE…NVIAWLNKQL (301 aa)). The segment at 623-668 (GSVPVKGQRNGSSAGTVPVRPALPKSGSSPILSAYFPGQQSRLPAS) is disordered.

In terms of assembly, nine homodimers form a cartwheel structure with an internal diameter of 23 nM and radial spokes connecting to the microtubule triplets.

The protein resides in the cytoplasm. It is found in the cytoskeleton. The protein localises to the microtubule organizing center. Its subcellular location is the centrosome. In terms of biological role, central scaffolding component of the centrioles ensuring their 9-fold symmetry. Required for centrosome biogenesis and duplication: required both for mother-centriole-dependent centriole duplication and deuterosome-dependent centriole amplification in multiciliated cells. The protein is Spindle assembly abnormal protein 6 homolog (sas6) of Xenopus laevis (African clawed frog).